The chain runs to 470 residues: Cyclin-dependent kinase E-1 (470 aa).

A Protein kinase domain is found at 25 to 333; sequence YNLVGKIGEG…ASQALEHEYF (309 aa). Residues 31 to 39 and Lys-55 each bind ATP; that span reads IGEGTYGLV. Residue Tyr-36 is modified to Phosphotyrosine. Catalysis depends on Asp-154, which acts as the Proton acceptor. The disordered stretch occupies residues 428 to 470; sequence LNPSVPLQQQRGMAQPHQQQQLRRKDPGMGMSGYAPPNKSRRL. Polar residues predominate over residues 432 to 448; it reads VPLQQQRGMAQPHQQQQ.

This sequence belongs to the protein kinase superfamily. CMGC Ser/Thr protein kinase family. CDC2/CDKX subfamily. As to quaternary structure, interacts with MED14, HDA19 and LUG. Interacts with KIN10. As to expression, expressed in roots, leaves and stems. Expressed in young dividing tissue, such as shoot and root tips, lateral root primordia, young leaves and flowers. Expressed in the inflorescence meristem, inflorescence stem and young flowers.

The protein localises to the nucleus. It carries out the reaction L-seryl-[protein] + ATP = O-phospho-L-seryl-[protein] + ADP + H(+). The enzyme catalyses L-threonyl-[protein] + ATP = O-phospho-L-threonyl-[protein] + ADP + H(+). The catalysed reaction is [DNA-directed RNA polymerase] + ATP = phospho-[DNA-directed RNA polymerase] + ADP + H(+). Functionally, involved in cell differentiation. Required for the specification of stamen and carpel identities and for the proper termination of stem cells in the floral meristem. This is Cyclin-dependent kinase E-1 (CDKE-1) from Arabidopsis thaliana (Mouse-ear cress).